A 271-amino-acid polypeptide reads, in one-letter code: ABC transporter I family member 10 (271 aa).

One can recognise an ABC transporter domain in the interval 40–267; the sequence is VECRNLCFSV…IKAKQSSYID (228 aa). Residue 77 to 84 participates in ATP binding; that stretch reads GPNGCGKS.

It belongs to the ABC transporter superfamily. ABCI family.

This is ABC transporter I family member 10 (ABCI10) from Arabidopsis thaliana (Mouse-ear cress).